We begin with the raw amino-acid sequence, 363 residues long: Cytochrome c oxidase subunit 2 (363 aa).

The segment at methionine 1 to glycine 23 is disordered. A signal peptide spans methionine 1–alanine 41. 2 helical membrane-spanning segments follow: residues leucine 71 to phenylalanine 91 and leucine 118 to valine 138. 4 residues coordinate Cu cation: histidine 254, cysteine 295, cysteine 299, and histidine 303.

Belongs to the cytochrome c oxidase subunit 2 family. Requires Cu cation as cofactor. The cofactor is heme.

Its subcellular location is the cell membrane. It carries out the reaction 4 Fe(II)-[cytochrome c] + O2 + 8 H(+)(in) = 4 Fe(III)-[cytochrome c] + 2 H2O + 4 H(+)(out). Subunits I and II form the functional core of the enzyme complex. Electrons originating in cytochrome c are transferred via heme a and Cu(A) to the binuclear center formed by heme a3 and Cu(B). The polypeptide is Cytochrome c oxidase subunit 2 (ctaC) (Mycobacterium bovis (strain ATCC BAA-935 / AF2122/97)).